We begin with the raw amino-acid sequence, 723 residues long: Malate synthase G (723 aa).

Residues V118, 125–126 (RY), S274, and R311 contribute to the acetyl-CoA site. R338 serves as the catalytic Proton acceptor. Residues R338, E427, and 452–455 (GFLD) each bind glyoxylate. Positions 427 and 455 each coordinate Mg(2+). P536 is an acetyl-CoA binding site. C617 is subject to Cysteine sulfenic acid (-SOH). Residue D631 is the Proton donor of the active site. C688 carries the cysteine sulfenic acid (-SOH) modification.

The protein belongs to the malate synthase family. GlcB subfamily. As to quaternary structure, monomer. The cofactor is Mg(2+).

It localises to the cytoplasm. The catalysed reaction is glyoxylate + acetyl-CoA + H2O = (S)-malate + CoA + H(+). Its pathway is carbohydrate metabolism; glyoxylate cycle; (S)-malate from isocitrate: step 2/2. Involved in the glycolate utilization. Catalyzes the condensation and subsequent hydrolysis of acetyl-coenzyme A (acetyl-CoA) and glyoxylate to form malate and CoA. This chain is Malate synthase G, found in Shigella flexneri.